Consider the following 232-residue polypeptide: H-2 class II histocompatibility antigen, E-S beta chain (232 aa).

Positions 1-90 are beta-1; sequence WFLEYSTSEC…LDKFLVPRRV (90 aa). The Extracellular segment spans residues 1-193; it reads WFLEYSTSEC…KAQSTSAQNK (193 aa). 2 disulfide bridges follow: cysteine 10-cysteine 74 and cysteine 112-cysteine 168. Residue asparagine 14 is glycosylated (N-linked (GlcNAc...) asparagine). The interval 91–193 is beta-2; the sequence is EPTVTVYPTK…KAQSTSAQNK (103 aa). The region spanning 92 to 182 is the Ig-like C1-type domain; that stretch reads PTVTVYPTKT…PSLTDPVTVE (91 aa). A helical membrane pass occupies residues 194 to 216; that stretch reads MLSGVGGFVLGLLFLGAGLFIYF. The Cytoplasmic portion of the chain corresponds to 217-232; it reads RNQKGQSGLQPTGLLS.

It belongs to the MHC class II family. In terms of processing, ubiquitinated in immature dendritic cells leading to down-regulation of MHC class II.

Its subcellular location is the membrane. In Mus musculus (Mouse), this protein is H-2 class II histocompatibility antigen, E-S beta chain (H2-Eb1).